The following is a 1192-amino-acid chain: Outer capsid protein VP2 (1192 aa).

The interval 1112–1192 is disordered; the sequence is IDQFMLDDMP…QSVAKPGIVR (81 aa). Residues 1140-1150 are compositionally biased toward low complexity; sequence PSAAANTEAST. Polar residues predominate over residues 1159 to 1183; sequence NVVSPTVPGQPSQTPVNPNQSTELQ.

Its subcellular location is the virion. The enzyme catalyses a 5'-end diphospho-ribonucleoside in mRNA + GTP + H(+) = a 5'-end (5'-triphosphoguanosine)-ribonucleoside in mRNA + diphosphate. It carries out the reaction a 5'-end (5'-triphosphoguanosine)-ribonucleoside in mRNA + S-adenosyl-L-methionine = a 5'-end (N(7)-methyl 5'-triphosphoguanosine)-ribonucleoside in mRNA + S-adenosyl-L-homocysteine. Outer capsid protein involved in mRNA capping. Catalyzes the last 3 enzymatic activities for formation of the 5' cap structure on the viral plus-strand transcripts, namely the RNA guanylyltransferase, RNA-7N- and RNA-2'O-methyltransferase activities. In Rice ragged stunt virus (isolate Thailand) (RRSV), this protein is Outer capsid protein VP2 (S2).